Consider the following 87-residue polypeptide: Selenoprotein W (87 aa).

The cysteinyl-selenocysteine (Cys-Sec); redox-active cross-link spans 10-13 (CGAU). Residue U13 is a non-standard amino acid, selenocysteine. At C37 the chain carries S-glutathionyl cysteine.

This sequence belongs to the SelWTH family. Selenoprotein W subfamily. As to quaternary structure, interacts with DPYSL2, PRDX1, YWHAB, YWHAG, HSP70 and HSP90. In terms of tissue distribution, highest levels detected in skeletal muscle, tongue, heart and brain. Expressed at significantly higher levels in female skeletal muscle than in male and at slightly higher levels in female cardiac muscle than in male (at protein level). Also detected at low levels in liver.

The protein resides in the cytoplasm. Functionally, plays a role as a glutathione (GSH)-dependent antioxidant. May be involved in a redox-related process. May play a role in the myopathies of selenium deficiency. In Macaca mulatta (Rhesus macaque), this protein is Selenoprotein W.